Reading from the N-terminus, the 326-residue chain is Structural protein ORF326a (326 aa).

Positions 1-28 are disordered; the sequence is MSTTFRGKKEEEEEEEEEKEEKEEELFN. The segment covering 11-26 has biased composition (acidic residues); sequence EEEEEEEEKEEKEEEL.

It localises to the virion. The polypeptide is Structural protein ORF326a (Acidianus two-tailed virus (ATV)).